A 444-amino-acid polypeptide reads, in one-letter code: C4-dicarboxylate transport protein (444 aa).

The next 8 membrane-spanning stretches (helical) occupy residues 7–29, 44–66, 79–101, 143–165, 186–208, 221–243, 291–313, and 353–375; these read LYKSLYFQVIVAIAIGILLGHFY, IKLIKMVIAPIIFCTVVSGIAGM, ALLYFEIVSTIALLIGLVVVNVV, IVGAFANGDILQVLMFSVIFGFA, VMFNIINMIMKLAPIGALGAMAF, LGQLMICFYITCVLFVLVVLGAI, VVGLVIPTGYSFNLDGTSIYLTM, and FIVLAATLSAVGHLPVAGLALIL. Positions 418–444 are disordered; sequence SGGRAISDTREEDDLGVAEGPTPTTVK.

This sequence belongs to the dicarboxylate/amino acid:cation symporter (DAACS) (TC 2.A.23) family.

The protein resides in the cell inner membrane. In terms of biological role, responsible for the transport of dicarboxylates such as succinate, fumarate, and malate from the periplasm across the inner membrane. In Pseudomonas chlororaphis (Pseudomonas aureofaciens), this protein is C4-dicarboxylate transport protein.